A 244-amino-acid polypeptide reads, in one-letter code: Futalosine hydrolase (244 aa).

The protein belongs to the PNP/UDP phosphorylase family. Futalosine hydrolase subfamily.

The catalysed reaction is futalosine + H2O = dehypoxanthine futalosine + hypoxanthine. Its pathway is quinol/quinone metabolism; menaquinone biosynthesis. Catalyzes the hydrolysis of futalosine (FL) to dehypoxanthine futalosine (DHFL) and hypoxanthine, a step in the biosynthesis of menaquinone (MK, vitamin K2). Cannot directly use aminodeoxyfutalosine (AFL) as a substrate. This chain is Futalosine hydrolase, found in Acidothermus cellulolyticus (strain ATCC 43068 / DSM 8971 / 11B).